The primary structure comprises 711 residues: MND1-interacting protein 1 (711 aa).

Residues 390-648 (EWAQKNAMQA…LEGSYDNEAN (259 aa)) adopt a coiled-coil conformation. 2 disordered regions span residues 552 to 571 (EALA…EGHN) and 602 to 622 (RLKA…WKPK). The span at 602 to 611 (RLKASSDSDS) shows a compositional bias: basic and acidic residues. The segment at 653–697 (CIICMKDEVSVVFLPCAHQVVCGSCSDSFFASNNGGSKVTCPCCR) adopts an RING-type zinc-finger fold.

As to quaternary structure, interacts (via C-terminal domain) with MND1 and HOP2. Interacts with XRI1 (via C-terminal domain).

This Arabidopsis thaliana (Mouse-ear cress) protein is MND1-interacting protein 1 (MIP1).